The sequence spans 160 residues: uncharacterized protein (160 aa).

4 helical membrane passes run 7–27 (IFLK…CIFL), 48–68 (LVFI…YQAF), 95–115 (AVTI…MAEI), and 121–141 (IIVI…FAAV).

The protein localises to the cell membrane. This is an uncharacterized protein from Bacillus subtilis (strain 168).